Consider the following 213-residue polypeptide: Uridine kinase (213 aa).

15 to 22 (GASASGKS) serves as a coordination point for ATP.

Belongs to the uridine kinase family.

The protein localises to the cytoplasm. The catalysed reaction is uridine + ATP = UMP + ADP + H(+). The enzyme catalyses cytidine + ATP = CMP + ADP + H(+). It functions in the pathway pyrimidine metabolism; CTP biosynthesis via salvage pathway; CTP from cytidine: step 1/3. Its pathway is pyrimidine metabolism; UMP biosynthesis via salvage pathway; UMP from uridine: step 1/1. The sequence is that of Uridine kinase from Serratia proteamaculans (strain 568).